The sequence spans 574 residues: ESX-1 secretion system protein EccA1 (574 aa).

335–342 (GPPGTGKT) is a binding site for ATP.

It belongs to the CbxX/CfxQ family. In terms of assembly, part of the ESX-1 / type VII secretion system (T7SS), which is composed of cytosolic and membrane components.

It is found in the cytoplasm. Its function is as follows. Part of the ESX-1 / type VII specialized secretion system (T7SS), which exports several proteins including EsxA and EsxB. Plays a role in DNA conjugation, in both donor and recipient strains. EccA1 exhibits ATPase activity and may provide energy for the export of ESX-1 substrates. The sequence is that of ESX-1 secretion system protein EccA1 from Mycolicibacterium smegmatis (strain ATCC 700084 / mc(2)155) (Mycobacterium smegmatis).